A 192-amino-acid chain; its full sequence is GTP cyclohydrolase-2 (192 aa).

Residue 50 to 54 (RLHSE) coordinates GTP. Positions 55, 66, and 68 each coordinate Zn(2+). GTP contacts are provided by residues 92 to 94 (EGR) and Thr-114. Asp-126 serves as the catalytic Proton acceptor. The Nucleophile role is filled by Arg-128. GTP contacts are provided by Thr-149 and Lys-154.

This sequence belongs to the GTP cyclohydrolase II family. Requires Zn(2+) as cofactor.

It carries out the reaction GTP + 4 H2O = 2,5-diamino-6-hydroxy-4-(5-phosphoribosylamino)-pyrimidine + formate + 2 phosphate + 3 H(+). The protein operates within cofactor biosynthesis; riboflavin biosynthesis; 5-amino-6-(D-ribitylamino)uracil from GTP: step 1/4. In terms of biological role, catalyzes the conversion of GTP to 2,5-diamino-6-ribosylamino-4(3H)-pyrimidinone 5'-phosphate (DARP), formate and pyrophosphate. This chain is GTP cyclohydrolase-2, found in Helicobacter pylori (strain Shi470).